The sequence spans 170 residues: Adenine phosphoribosyltransferase (170 aa).

The protein belongs to the purine/pyrimidine phosphoribosyltransferase family. Homodimer.

The protein localises to the cytoplasm. The enzyme catalyses AMP + diphosphate = 5-phospho-alpha-D-ribose 1-diphosphate + adenine. It functions in the pathway purine metabolism; AMP biosynthesis via salvage pathway; AMP from adenine: step 1/1. Its function is as follows. Catalyzes a salvage reaction resulting in the formation of AMP, that is energically less costly than de novo synthesis. This Bacillus licheniformis (strain ATCC 14580 / DSM 13 / JCM 2505 / CCUG 7422 / NBRC 12200 / NCIMB 9375 / NCTC 10341 / NRRL NRS-1264 / Gibson 46) protein is Adenine phosphoribosyltransferase.